Reading from the N-terminus, the 482-residue chain is tRNA sulfurtransferase (482 aa).

Residues 61 to 165 form the THUMP domain; that stretch reads LAIRDALTRI…DDRLLLIKGR (105 aa). ATP is bound by residues 183–184, lysine 265, glycine 287, and glutamine 296; that span reads LI. The cysteines at positions 344 and 456 are disulfide-linked. In terms of domain architecture, Rhodanese spans 404–482; that stretch reads FGANDVILDI…GFANVKVYRP (79 aa). Residue cysteine 456 is the Cysteine persulfide intermediate of the active site.

Belongs to the ThiI family.

It is found in the cytoplasm. The catalysed reaction is [ThiI sulfur-carrier protein]-S-sulfanyl-L-cysteine + a uridine in tRNA + 2 reduced [2Fe-2S]-[ferredoxin] + ATP + H(+) = [ThiI sulfur-carrier protein]-L-cysteine + a 4-thiouridine in tRNA + 2 oxidized [2Fe-2S]-[ferredoxin] + AMP + diphosphate. It carries out the reaction [ThiS sulfur-carrier protein]-C-terminal Gly-Gly-AMP + S-sulfanyl-L-cysteinyl-[cysteine desulfurase] + AH2 = [ThiS sulfur-carrier protein]-C-terminal-Gly-aminoethanethioate + L-cysteinyl-[cysteine desulfurase] + A + AMP + 2 H(+). The protein operates within cofactor biosynthesis; thiamine diphosphate biosynthesis. Catalyzes the ATP-dependent transfer of a sulfur to tRNA to produce 4-thiouridine in position 8 of tRNAs, which functions as a near-UV photosensor. Also catalyzes the transfer of sulfur to the sulfur carrier protein ThiS, forming ThiS-thiocarboxylate. This is a step in the synthesis of thiazole, in the thiamine biosynthesis pathway. The sulfur is donated as persulfide by IscS. This is tRNA sulfurtransferase from Salmonella typhi.